A 258-amino-acid chain; its full sequence is Ditrans,polycis-undecaprenyl-diphosphate synthase ((2E,6E)-farnesyl-diphosphate specific) (258 aa).

The active site involves aspartate 24. Aspartate 24 contacts Mg(2+). Residues 25-28 (GNGR), tryptophan 29, arginine 37, histidine 41, and 69-71 (SSE) contribute to the substrate site. Catalysis depends on asparagine 72, which acts as the Proton acceptor. Substrate is bound by residues tryptophan 73, arginine 75, arginine 192, and 198-200 (RIS). Glutamate 211 serves as a coordination point for Mg(2+).

Belongs to the UPP synthase family. As to quaternary structure, homodimer. Mg(2+) serves as cofactor.

It carries out the reaction 8 isopentenyl diphosphate + (2E,6E)-farnesyl diphosphate = di-trans,octa-cis-undecaprenyl diphosphate + 8 diphosphate. Its function is as follows. Catalyzes the sequential condensation of isopentenyl diphosphate (IPP) with (2E,6E)-farnesyl diphosphate (E,E-FPP) to yield (2Z,6Z,10Z,14Z,18Z,22Z,26Z,30Z,34E,38E)-undecaprenyl diphosphate (di-trans,octa-cis-UPP). UPP is the precursor of glycosyl carrier lipid in the biosynthesis of bacterial cell wall polysaccharide components such as peptidoglycan and lipopolysaccharide. In Xanthomonas campestris pv. campestris (strain ATCC 33913 / DSM 3586 / NCPPB 528 / LMG 568 / P 25), this protein is Ditrans,polycis-undecaprenyl-diphosphate synthase ((2E,6E)-farnesyl-diphosphate specific).